Consider the following 784-residue polypeptide: Toll-like receptor 2 (784 aa).

The first 20 residues, 1 to 20, serve as a signal peptide directing secretion; it reads MPRALWTAWVWAXIILSTEG. Residues 21–587 are Extracellular-facing; the sequence is ASDQASSLSC…ARLSLSECHR (567 aa). C30 and C36 are disulfide-bonded. LRR repeat units lie at residues 54-77, 78-101, 102-125, 126-150, 151-175, 176-199, 200-223, 224-250, 251-278, 279-308, 309-337, 338-361, 362-388, 389-414, 415-437, 438-457, 458-478, 479-500, and 501-524; these read VKSLDLSNNEITYVGNRDLQRCVN, LKTLRLGANEIHTVEEDSFFHLRN, LEYLDLSYNRLSNLSSSWFRSLYV, LKFLNLLGNLYKTLGETSLFSHLPN, LXTLKVGNSNSFTEIHEKDFTGLTF, LEELEISAQNLQIYVPKSLKSIQN, ISHLILHLKQPVLLVDILVDIVSS, LDCLELRDTNLHTFHFSEASISEMSTS, VKKLIFRNVQFTDESFVEVVKLFNYVSG, ILEVEFDDCTHDGIGDFRALSLDRIRHLGN, VETLTIRKLHIPQFFLFHDLSSIYPLTGK, VKRVTIENSKVFLVPCLLSQHLKS, LEYLDLSENLMSEETLKNSACKDAWPF, LQTLVLRQNRLKSLEKTGELLLTLEN, LNSLDISKNNFLSMPETCQWPGK, MKQLNLSSTRIHSLTQCLPQ, TLEILDVSNNNLDSFSLILPQ, LKELYISRNKLKTLPDASFLPV, and LSVMRISRNIINTFSKEQLDSFQQ. N114 carries an N-linked (GlcNAc...) asparagine glycan. The N-linked (GlcNAc...) asparagine glycan is linked to N199. The cysteines at positions 353 and 382 are disulfide-linked. C432 and C454 are disulfide-bonded. N442 carries N-linked (GlcNAc...) asparagine glycosylation. Residues 525-579 form the LRRCT domain; the sequence is LKTLEAGGNNFICSCDFLSFTQGQQALGRVLVDWPDDYRCDSPSHVRGQRVQDAR. Residues 588–608 form a helical membrane-spanning segment; that stretch reads AAVVSAACCALFLVLLLTGVL. The Cytoplasmic portion of the chain corresponds to 609–784; sequence CHRFHGLWYM…WLNLRAAIRS (176 aa). In terms of domain architecture, TIR spans 639–782; sequence ICYDAFVSYS…GFWLNLRAAI (144 aa). A Glycyl lysine isopeptide (Lys-Gly) (interchain with G-Cter in ubiquitin) cross-link involves residue K754. Residues 761–778 carry the ATG16L1-binding motif motif; sequence YLEWPVDETQQEGFWLNL.

It belongs to the Toll-like receptor family. In terms of assembly, interacts with LY96, TLR1 and TLR6 (via extracellular domain). TLR2 seems to exist in heterodimers with either TLR1 or TLR6 before stimulation by the ligand. The heterodimers form bigger oligomers in response to their corresponding ligands as well as further heterotypic associations with other receptors such as CD14 and/or CD36. Binds MYD88 (via TIR domain). Interacts with TICAM1. Interacts with CNPY3. Interacts with ATG16L1. Interacts with PPP1R11. Interacts with TICAM2. Interacts with TIRAP. In terms of processing, ubiquitinated at Lys-754 by PPP1R11, leading to its degradation. Deubiquitinated by USP2. Glycosylation of Asn-442 is critical for secretion of the N-terminal ectodomain of TLR2.

Its subcellular location is the membrane. The protein localises to the cytoplasmic vesicle. The protein resides in the phagosome membrane. It localises to the membrane raft. In terms of biological role, cooperates with LY96 to mediate the innate immune response to bacterial lipoproteins and other microbial cell wall components. Cooperates with TLR1 or TLR6 to mediate the innate immune response to bacterial lipoproteins or lipopeptides. Acts via MYD88 and TRAF6, leading to NF-kappa-B activation, cytokine secretion and the inflammatory response. May also promote apoptosis in response to lipoproteins. Forms activation clusters composed of several receptors depending on the ligand, these clusters trigger signaling from the cell surface and subsequently are targeted to the Golgi in a lipid-raft dependent pathway. Forms the cluster TLR2:TLR6:CD14:CD36 in response to diacylated lipopeptides and TLR2:TLR1:CD14 in response to triacylated lipopeptides. The chain is Toll-like receptor 2 (TLR2) from Bison bison (American bison).